We begin with the raw amino-acid sequence, 385 residues long: 8-amino-7-oxononanoate synthase (385 aa).

Arginine 23 serves as a coordination point for substrate. A pyridoxal 5'-phosphate-binding site is contributed by 110 to 111; it reads GF. Histidine 135 is a substrate binding site. Pyridoxal 5'-phosphate contacts are provided by serine 180, histidine 208, and threonine 234. An N6-(pyridoxal phosphate)lysine modification is found at lysine 237. Threonine 350 serves as a coordination point for substrate.

Belongs to the class-II pyridoxal-phosphate-dependent aminotransferase family. BioF subfamily. In terms of assembly, homodimer. Requires pyridoxal 5'-phosphate as cofactor.

It catalyses the reaction 6-carboxyhexanoyl-[ACP] + L-alanine + H(+) = (8S)-8-amino-7-oxononanoate + holo-[ACP] + CO2. The protein operates within cofactor biosynthesis; biotin biosynthesis. Functionally, catalyzes the decarboxylative condensation of pimeloyl-[acyl-carrier protein] and L-alanine to produce 8-amino-7-oxononanoate (AON), [acyl-carrier protein], and carbon dioxide. This Vibrio vulnificus (strain CMCP6) protein is 8-amino-7-oxononanoate synthase.